Here is a 257-residue protein sequence, read N- to C-terminus: MAVGKNNNKMGKKGGKKKAVDPFSRKEWYDIKAPNMFNTRQVGKTLINRTQGTKIASEGLKGRVFEVSLGDLNNSEADFRKFKLIAEDVQGKNVLTNFHAMSMTHDKLCSIVKKWHTLIEANTAVKTTDGYTLRVFVIAFTKKSVNQVKKTSYTKTSKIRKIRSEMIGCIEKEVTGCDLKEVVSKLIPDSIGKDIEKTCSKLYPLQEVYIRKVKIIKRPKVDLGRLHDLHGDSITVGADGEKVDRPDDYEPPVQQEV.

The segment at 237 to 257 (GADGEKVDRPDDYEPPVQQEV) is disordered. The span at 239–248 (DGEKVDRPDD) shows a compositional bias: basic and acidic residues.

This sequence belongs to the eukaryotic ribosomal protein eS1 family. Component of the small ribosomal subunit. Mature ribosomes consist of a small (40S) and a large (60S) subunit. The 40S subunit contains about 33 different proteins and 1 molecule of RNA (18S). The 60S subunit contains about 49 different proteins and 3 molecules of RNA (28S, 5.8S and 5S).

The protein resides in the cytoplasm. This is Small ribosomal subunit protein eS1 from Caenorhabditis elegans.